The primary structure comprises 275 residues: Phosphonates import ATP-binding protein PhnC (275 aa).

Positions 2–246 (LKIENLTKRY…ALTEIYGEEE (245 aa)) constitute an ABC transporter domain. Residue 35–42 (GPSGAGKS) coordinates ATP.

This sequence belongs to the ABC transporter superfamily. Phosphonates importer (TC 3.A.1.9.1) family. The complex is composed of two ATP-binding proteins (PhnC), two transmembrane proteins (PhnE) and a solute-binding protein (PhnD).

Its subcellular location is the cell inner membrane. It catalyses the reaction phosphonate(out) + ATP + H2O = phosphonate(in) + ADP + phosphate + H(+). Its function is as follows. Part of the ABC transporter complex PhnCDE involved in phosphonates import. Responsible for energy coupling to the transport system. In Wolinella succinogenes (strain ATCC 29543 / DSM 1740 / CCUG 13145 / JCM 31913 / LMG 7466 / NCTC 11488 / FDC 602W) (Vibrio succinogenes), this protein is Phosphonates import ATP-binding protein PhnC.